A 414-amino-acid polypeptide reads, in one-letter code: uncharacterized protein (414 aa).

Residues 1-66 are Lumenal-facing; sequence MNPSVPKVMK…LQRISKDYLK (66 aa). A disordered region spans residues 20 to 51; it reads SKEMNDTSLQLPSTTRSLSPKESNSNEDFNVD. Residues 25–51 are compositionally biased toward polar residues; sequence DTSLQLPSTTRSLSPKESNSNEDFNVD. K40 is covalently cross-linked (Glycyl lysine isopeptide (Lys-Gly) (interchain with G-Cter in ubiquitin)). The helical transmembrane segment at 67 to 87 threads the bilayer; sequence PNIGLVLLTVSYFFNSAMVVS. One can recognise an EamA 1 domain in the interval 78-215; the sequence is YFFNSAMVVS…SLLGVVLIVR (138 aa). The Cytoplasmic segment spans residues 88 to 106; it reads TKVLENDPDDIANDRQIKP. A helical transmembrane segment spans residues 107–127; the sequence is LQILLVRMVITYIGTLIYMYI. Topologically, residues 128–144 are lumenal; sequence NKSTISDVPFGKPEVRK. Residues 145 to 167 traverse the membrane as a helical segment; it reads WLVLRGCTGFFGVFGMYYSLMYL. The Cytoplasmic segment spans residues 168–171; that stretch reads TISD. A helical transmembrane segment spans residues 172–191; it reads AVLITFLAPSLTIFLSWVIL. The Lumenal portion of the chain corresponds to 192–199; sequence RERFTKVE. Residues 200–220 form a helical membrane-spanning segment; it reads ALGSLISLLGVVLIVRPSFLF. Over 221–241 the chain is Cytoplasmic; that stretch reads GTPELTDSSSQIVESSDPKSR. Residues 242–262 form a helical membrane-spanning segment; the sequence is LIATLVGLWGVLGMSCVYIII. One can recognise an EamA 2 domain in the interval 253-379; it reads LGMSCVYIII…IISATLWVIR (127 aa). The Lumenal segment spans residues 263–269; that stretch reads RYIGKRA. A helical transmembrane segment spans residues 270-290; the sequence is HAIMSVSYFSLITAIVSFIGI. Residues 291 to 307 lie on the Cytoplasmic side of the membrane; the sequence is NTIPSMKFQIPHSKKQW. A helical membrane pass occupies residues 308–328; sequence ILFGNLGVSGFIFQLLLTMGI. At 329 to 357 the chain is on the lumenal side; it reads QRERAGRGSLMTYTQLLYAVFWDVALYKH. A helical membrane pass occupies residues 358–378; the sequence is WPNIWSWIGMIIIISATLWVI. The Cytoplasmic segment spans residues 379–414; that stretch reads RIRAANNETTAKDLTPIIDDEENSIPLTEFDLSDSK.

The protein to yeast YPL264c.

It is found in the membrane. This is an uncharacterized protein from Saccharomyces cerevisiae (strain ATCC 204508 / S288c) (Baker's yeast).